We begin with the raw amino-acid sequence, 100 residues long: Urease subunit gamma (100 aa).

Belongs to the urease gamma subunit family. As to quaternary structure, heterotrimer of UreA (gamma), UreB (beta) and UreC (alpha) subunits. Three heterotrimers associate to form the active enzyme.

Its subcellular location is the cytoplasm. The enzyme catalyses urea + 2 H2O + H(+) = hydrogencarbonate + 2 NH4(+). It participates in nitrogen metabolism; urea degradation; CO(2) and NH(3) from urea (urease route): step 1/1. The chain is Urease subunit gamma from Rhodopseudomonas palustris (strain BisB18).